Consider the following 531-residue polypeptide: Keratin, type II cytoskeletal 79 (531 aa).

Over residues 1 to 12 (MRSSLSRQTFST) the composition is skewed to polar residues. The interval 1 to 55 (MRSSLSRQTFSTKGGFSSNSASGGGGSRMRTSYSSVTMSRGSGGGGGVRSGSSSG) is disordered. Residues 1–138 (MRSSLSRQTF…DPEIQRVRTQ (138 aa)) form a head region. Residues 28–40 (RMRTSYSSVTMSR) show a composition bias toward low complexity. Over residues 41–55 (GSGGGGGVRSGSSSG) the composition is skewed to gly residues. The coil 1A stretch occupies residues 139–174 (EREQIKTLNNKFASFIDKVRFLEQQNKVLETKWALL). Positions 139–453 (EREQIKTLNN…KLLESEESRM (315 aa)) constitute an IF rod domain. The segment at 175–194 (QEQSQNTGVARSLEPFFENY) is linker 1. The interval 195–286 (LSTLRRQLDT…QLFEMELSQV (92 aa)) is coil 1B. The tract at residues 287 to 310 (QTNVSDTNVILSMDNNRNLDLDSI) is linker 12. A coil 2 region spans residues 311-449 (IAEVKAQYEL…ATYRKLLESE (139 aa)). Residues 450-531 (ESRMSGDCPS…TTVKTSSRRY (82 aa)) form a tail region.

It belongs to the intermediate filament family. As to quaternary structure, heterotetramer of two type I and two type II keratins.

In Mus musculus (Mouse), this protein is Keratin, type II cytoskeletal 79 (Krt79).